The sequence spans 118 residues: Large ribosomal subunit protein uL24 (118 aa).

The protein belongs to the universal ribosomal protein uL24 family. As to quaternary structure, part of the 50S ribosomal subunit.

In terms of biological role, one of two assembly initiator proteins, it binds directly to the 5'-end of the 23S rRNA, where it nucleates assembly of the 50S subunit. Functionally, one of the proteins that surrounds the polypeptide exit tunnel on the outside of the subunit. This chain is Large ribosomal subunit protein uL24, found in Prochlorococcus marinus (strain MIT 9303).